The sequence spans 1124 residues: Zinc finger E-box-binding homeobox 1 (1124 aa).

2 disordered regions span residues 1 to 124 and 142 to 163; these read MADG…NHDP and APEE…NGTP. Residues 18–30 are compositionally biased toward low complexity; the sequence is NNVTNYNTVVETN. Phosphoserine is present on residues Ser-31 and Ser-33. The segment covering 44–62 has biased composition (acidic residues); the sequence is EESVTDAADCEGVPEDDLP. Positions 72 to 91 are enriched in basic and acidic residues; sequence SSEREGNAKNCWEDDRKEGQ. The C2H2-type 1 zinc-finger motif lies at 170–193; it reads LTCPYCDRGYKRFTSLKEHIKYRH. Residues Lys-186 and Lys-195 each participate in a glycyl lysine isopeptide (Lys-Gly) (interchain with G-Cter in SUMO2) cross-link. 2 consecutive C2H2-type zinc fingers follow at residues 200–222 and 240–262; these read FSCS…MTSH and FKCT…LRIH. A C2H2-type 4; atypical zinc finger spans residues 268–292; sequence YECPNCKKRFSHSGSYSSHISSKKC. The segment at 304–327 is disordered; sequence TGLKTSQCSSPSLSASPGSPTRPQ. Lys-307 is covalently cross-linked (Glycyl lysine isopeptide (Lys-Gly) (interchain with G-Cter in SUMO2)). Over residues 309-322 the composition is skewed to low complexity; sequence SQCSSPSLSASPGS. Phosphoserine occurs at positions 313 and 322. Glycyl lysine isopeptide (Lys-Gly) (interchain with G-Cter in SUMO2) cross-links involve residues Lys-331 and Lys-335. Lys-347 participates in a covalent cross-link: Glycyl lysine isopeptide (Lys-Gly) (interchain with G-Cter in SUMO); alternate. Lys-347 is covalently cross-linked (Glycyl lysine isopeptide (Lys-Gly) (interchain with G-Cter in SUMO2); alternate). Glycyl lysine isopeptide (Lys-Gly) (interchain with G-Cter in SUMO2) cross-links involve residues Lys-439, Lys-493, Lys-504, Lys-515, Lys-548, and Lys-553. Disordered stretches follow at residues 551–586 and 636–714; these read DLKQ…SPSQ and QISV…SSSR. Positions 581–640 form a DNA-binding region, homeobox; atypical; sequence NLSPSQPPLKNLLSLLKAYYALNAQPSAEELSKIADSVNLPLDVVKKWFEKMQAGQISVQ. Ser-642, Ser-679, Ser-686, Ser-693, and Ser-700 each carry phosphoserine. A compositionally biased stretch (polar residues) spans 656 to 687; it reads AKNNDQPQSANANEPQDSTVNLQSPLKMTNSP. The segment covering 692 to 714 has biased composition (low complexity); the sequence is GSTTNGSRSSTPSPSPLNLSSSR. The residue at position 702 (Thr-702) is a Phosphothreonine. Ser-704 is modified (phosphoserine). A Glycyl lysine isopeptide (Lys-Gly) (interchain with G-Cter in SUMO); alternate cross-link involves residue Lys-774. A Glycyl lysine isopeptide (Lys-Gly) (interchain with G-Cter in SUMO2); alternate cross-link involves residue Lys-774. The tract at residues 856–898 is disordered; that stretch reads PPLKVIQPNGNQDERQDTSSEGVSNVEDQNDSDSTPPKKKMRK. The span at 874–890 shows a compositional bias: polar residues; the sequence is SSEGVSNVEDQNDSDST. C2H2-type zinc fingers lie at residues 904-926 and 932-954; these read YACD…KYEH and HECG…MRLH. A C2H2-type 7; atypical zinc finger spans residues 960-981; sequence YQCDKCGKRFSHSGSYSQHMNH. The segment at 989-1124 is disordered; that stretch reads EAEERDSTEQ…QVSEEKTNEA (136 aa). 2 stretches are compositionally biased toward acidic residues: residues 1031–1052 and 1062–1084; these read EEDE…ELQE and DEEE…ENEG. Over residues 1085-1099 the composition is skewed to basic and acidic residues; the sequence is EEAKTEGLMKDDRAE. The span at 1100 to 1115 shows a compositional bias: polar residues; the sequence is SQASSLGQKVGESSEQ.

Belongs to the delta-EF1/ZFH-1 C2H2-type zinc-finger family. Interacts (via N-terminus) with SMARCA4/BRG1. Post-translationally, ubiquitinated, leading to degradation in a proteasome-dependent manner. Deubiquitinated by USP51, leading to stabilization. In terms of tissue distribution, colocalizes with SMARCA4/BRG1 in E-cadherin-negative cells from established lines, and stroma of normal colon as well as in de-differentiated epithelial cells at the invasion front of colorectal carcinomas (at protein level). Expressed in heart and skeletal muscle, but not in liver, spleen, or pancreas.

The protein localises to the nucleus. Functionally, acts as a transcriptional repressor. Inhibits interleukin-2 (IL-2) gene expression. Enhances or represses the promoter activity of the ATP1A1 gene depending on the quantity of cDNA and on the cell type. Represses E-cadherin promoter and induces an epithelial-mesenchymal transition (EMT) by recruiting SMARCA4/BRG1. Represses BCL6 transcription in the presence of the corepressor CTBP1. Positively regulates neuronal differentiation. Represses RCOR1 transcription activation during neurogenesis. Represses transcription by binding to the E box (5'-CANNTG-3'). In the absence of TGFB1, acts as a repressor of COL1A2 transcription via binding to the E-box in the upstream enhancer region. The chain is Zinc finger E-box-binding homeobox 1 from Homo sapiens (Human).